The chain runs to 261 residues: Tryptophan synthase alpha chain (261 aa).

Residues glutamate 49 and aspartate 60 each act as proton acceptor in the active site.

This sequence belongs to the TrpA family. In terms of assembly, tetramer of two alpha and two beta chains.

It catalyses the reaction (1S,2R)-1-C-(indol-3-yl)glycerol 3-phosphate + L-serine = D-glyceraldehyde 3-phosphate + L-tryptophan + H2O. The protein operates within amino-acid biosynthesis; L-tryptophan biosynthesis; L-tryptophan from chorismate: step 5/5. Its function is as follows. The alpha subunit is responsible for the aldol cleavage of indoleglycerol phosphate to indole and glyceraldehyde 3-phosphate. This is Tryptophan synthase alpha chain from Roseiflexus castenholzii (strain DSM 13941 / HLO8).